Here is a 1072-residue protein sequence, read N- to C-terminus: Neurofilament heavy polypeptide (1072 aa).

Phosphoserine is present on Ser-74. Positions 94–409 constitute an IF rod domain; that stretch reads EKEQLQALND…KLLEGEECRI (316 aa). 3 coiled-coil regions span residues 98–132, 174–222, and 293–380; these read LQAL…LRQQ, IAHV…LQEE, and LDRL…QLRE. The tract at residues 278 to 643 is 55 X 6 AA approximate tandem repeats of K-S-P-[VAGSE]-[KEVTSGA]-[EAVK]; sequence TVQSTLQSEE…AKSPAEAKSP (366 aa). Residues Ser-343, Ser-414, and Ser-417 each carry the phosphoserine modification. Positions 454-1072 are disordered; that stretch reads EEQTEEIQVT…PEDKAAKGDK (619 aa). A compositionally biased stretch (acidic residues) spans 455–487; sequence EQTEEIQVTEEVTEEEDKEAQGEEEEEAEEGGE. The span at 488 to 499 shows a compositional bias: low complexity; that stretch reads EAATTSPPAEEA. Ser-501 carries the post-translational modification Phosphoserine. The span at 501–584 shows a compositional bias: basic and acidic residues; it reads SPEKETKSPV…KSPAEAKSPA (84 aa). 36 tandem repeats follow at residues 507–512, 515–520, 521–526, 527–532, 533–538, 539–544, 545–550, 551–556, 557–562, 563–568, 569–574, 575–580, 581–586, 587–592, 593–598, 599–604, 605–610, 611–616, 617–622, 623–628, 629–634, 635–640, 641–646, 647–652, 653–658, 659–664, 665–670, 671–676, 677–682, 683–688, 689–694, 695–700, 701–706, 707–712, 713–718, and 719–724. Residues Ser-516, Ser-522, Ser-528, Ser-534, Ser-540, Ser-546, Ser-552, Ser-558, Ser-564, Ser-570, Ser-576, Ser-582, Ser-588, Ser-594, Ser-600, Ser-606, Ser-612, Ser-618, Ser-624, Ser-627, Ser-630, Ser-636, Ser-642, Ser-648, Ser-654, Ser-660, Ser-666, Ser-672, Ser-678, Ser-684, Ser-687, Ser-690, Ser-696, Ser-702, Ser-708, Ser-714, and Ser-720 each carry the phosphoserine modification. Basic and acidic residues predominate over residues 600 to 620; sequence SPAEAKSPAEVKSPVEAKSPA. Positions 621–631 are enriched in low complexity; the sequence is EAKSPASVKSP. Residues 720–774 show a composition bias toward basic and acidic residues; it reads SPAEAKPPAEAKSPAEAKSPAEAKSPAEAKSPAEAKSPVEVKSPEKAKSPVKEGA. A 37; approximate repeat occupies 725 to 730; it reads KPPAEA. Repeat copies occupy residues 731–736, 737–742, 743–748, 749–754, 755–760, 761–766, and 767–772. Residues Ser-732, Ser-738, Ser-744, Ser-750, Ser-756, and Ser-762 each carry the phosphoserine modification. The stretch at 775–780 is one 45; approximate repeat; the sequence is KSLAEA. A phosphoserine mark is found at Ser-776, Ser-782, and Ser-788. 2 consecutive repeat copies span residues 781 to 786 and 787 to 792. Composition is skewed to basic and acidic residues over residues 781–953 and 963–1072; these read KSPE…KAAA and GVKE…KGDK. The 48; approximate repeat unit spans residues 795–800; sequence KPPAEV. A run of 4 repeats spans residues 801–806, 807–812, 815–820, and 826–831. Phosphoserine is present on residues Ser-802, Ser-808, Ser-816, and Ser-827. Position 832 is a phosphothreonine (Thr-832). Ser-846, Ser-852, Ser-860, Ser-880, and Ser-937 each carry phosphoserine. 3 repeat units span residues 851–856, 859–864, and 879–884.

The protein belongs to the intermediate filament family. In terms of assembly, forms heterodimers with NEFL; which can further hetero-oligomerize (in vitro). Forms heterodimers with INA (in vitro). In terms of processing, there are a number of repeats of the tripeptide K-S-P, NFH is phosphorylated on a number of the serines in this motif. It is thought that phosphorylation of NFH results in the formation of interfilament cross bridges that are important in the maintenance of axonal caliber. Phosphorylation seems to play a major role in the functioning of the larger neurofilament polypeptides (NF-M and NF-H), the levels of phosphorylation being altered developmentally and coincidentally with a change in the neurofilament function. Post-translationally, phosphorylated in the head and rod regions by the PKC kinase PKN1, leading to the inhibition of polymerization. As to expression, expressed in the dorsal root ganglion neurons (at protein level). Expressed in cutaneous and muscular sensory neurons.

The protein localises to the cytoplasm. It is found in the cytoskeleton. The protein resides in the cell projection. It localises to the axon. Its function is as follows. Neurofilaments usually contain three intermediate filament proteins: NEFL, NEFM, and NEFH which are involved in the maintenance of neuronal caliber. NEFH has an important function in mature axons that is not subserved by the two smaller NEF proteins. May additionally cooperate with the neuronal intermediate filament proteins PRPH and INA to form neuronal filamentous networks. This Rattus norvegicus (Rat) protein is Neurofilament heavy polypeptide (Nefh).